The chain runs to 351 residues: MSTVVTIPRSVSWKGDAIAVLNQTKLPHSTEYKTLTTIEEVWKSIVMLEVRGAPAIGIVAAFGLALASKKYTTLHIEEFQKKFNRDCNYLGTSRPTAVNLFWAIDRMRESIQEITTIKEAQKILEEEALRIQQEDEAVCRSIGEHALTCFKDGDNILTICNAGSIATARYGTALAPFYIGKEKGVRLHAYACETRPVLQGGRLTTWELKQAGIDVTLITDNTAAHAIQTKEINAIIVGADRIVANGDTANKIGTMNLAILAKYFDIPFYVAAPLSTFDITKQTGAEIVIEERDETEVTKIFGKQVAPVGTTVYNPAFDVTPNKLITGIITEKGIICGDYKREIVSLFEKTS.

Residues 51–53 (RGA), R94, and Q199 contribute to the substrate site. Residue D240 is the Proton donor of the active site. A substrate-binding site is contributed by 250-251 (NK).

It belongs to the EIF-2B alpha/beta/delta subunits family. MtnA subfamily. Homodimer.

It carries out the reaction 5-(methylsulfanyl)-alpha-D-ribose 1-phosphate = 5-(methylsulfanyl)-D-ribulose 1-phosphate. Its pathway is amino-acid biosynthesis; L-methionine biosynthesis via salvage pathway; L-methionine from S-methyl-5-thio-alpha-D-ribose 1-phosphate: step 1/6. In terms of biological role, catalyzes the interconversion of methylthioribose-1-phosphate (MTR-1-P) into methylthioribulose-1-phosphate (MTRu-1-P). The polypeptide is Methylthioribose-1-phosphate isomerase (Bacillus thuringiensis subsp. konkukian (strain 97-27)).